The chain runs to 62 residues: Large ribosomal subunit protein uL29 (62 aa).

Belongs to the universal ribosomal protein uL29 family.

The sequence is that of Large ribosomal subunit protein uL29 from Cytophaga hutchinsonii (strain ATCC 33406 / DSM 1761 / CIP 103989 / NBRC 15051 / NCIMB 9469 / D465).